A 234-amino-acid chain; its full sequence is MTRTPLIICDFDGTVTMNDNIVSMMKEFAPPEWLELKDGVLSKSISIQEGVGRMFGLLPSSLKEELTGFILKDAKIRDGFLDFVSFVRSNGLPFYIVSGGMDFFVHPLLEGIVEKERIFCNHASFDNEHIHIDWPHACDGDCTNQCGCCKPSVIRKLSDQQKFLIMIGDSVTDVEAAKLSDMCFARDYLLTECKELGLRHLPFQDFHEVKTGIENIGEVQAWLQKKNAGANLPR.

The protein belongs to the HAD-like hydrolase superfamily. MtnX family.

The catalysed reaction is 2-hydroxy-5-methylsulfanyl-3-oxopent-1-enyl phosphate + H2O = 1,2-dihydroxy-5-(methylsulfanyl)pent-1-en-3-one + phosphate. Its pathway is amino-acid biosynthesis; L-methionine biosynthesis via salvage pathway; L-methionine from S-methyl-5-thio-alpha-D-ribose 1-phosphate: step 4/6. In terms of biological role, dephosphorylates 2-hydroxy-3-keto-5-methylthiopentenyl-1-phosphate (HK-MTPenyl-1-P) yielding 1,2-dihydroxy-3-keto-5-methylthiopentene (DHK-MTPene). The polypeptide is 2-hydroxy-3-keto-5-methylthiopentenyl-1-phosphate phosphatase (Bacillus velezensis (strain DSM 23117 / BGSC 10A6 / LMG 26770 / FZB42) (Bacillus amyloliquefaciens subsp. plantarum)).